Reading from the N-terminus, the 163-residue chain is MSSEHHAPIRATVEPVVAAAGLHLEECELKGQGATRTLQVLVDLPDGTEALGLDRVAAVAQEISDALDRDDPVPGPPYELEVSSPGATRTLETPRHWRRTVGHLVRIRTLEGERYTARLLEAHEDHAVVQRSHQPKKGMPVKLLDPERVDYASIRTARSEVEN.

The interval 66–85 (ALDRDDPVPGPPYELEVSSP) is disordered.

Belongs to the RimP family.

The protein localises to the cytoplasm. Its function is as follows. Required for maturation of 30S ribosomal subunits. The protein is Ribosome maturation factor RimP of Kocuria rhizophila (strain ATCC 9341 / DSM 348 / NBRC 103217 / DC2201).